Reading from the N-terminus, the 160-residue chain is MISNQNQVYVVNVREETLKNPYYRRVIDTSPHQQLVLMSLKPKEDIKFEIHPDNDQHIRIEKGTAIALTGKNKDTKHVLTEGMCIVIPAGTWHQIINSSNTDYLKLYTIYSPADHPPGEIDVRRPQSGGSGSKTGDFKNKYYKYKYKYFKLRSSVPRELN.

Residues 37 to 110 (LMSLKPKEDI…TDYLKLYTIY (74 aa)) form the Cupin type-2 domain.

The protein resides in the virion. This is an uncharacterized protein from Acanthamoeba polyphaga mimivirus (APMV).